The following is a 189-amino-acid chain: Probable nicotinate-nucleotide adenylyltransferase (189 aa).

This sequence belongs to the NadD family.

It carries out the reaction nicotinate beta-D-ribonucleotide + ATP + H(+) = deamido-NAD(+) + diphosphate. It participates in cofactor biosynthesis; NAD(+) biosynthesis; deamido-NAD(+) from nicotinate D-ribonucleotide: step 1/1. Its function is as follows. Catalyzes the reversible adenylation of nicotinate mononucleotide (NaMN) to nicotinic acid adenine dinucleotide (NaAD). The chain is Probable nicotinate-nucleotide adenylyltransferase from Cereibacter sphaeroides (strain ATCC 17023 / DSM 158 / JCM 6121 / CCUG 31486 / LMG 2827 / NBRC 12203 / NCIMB 8253 / ATH 2.4.1.) (Rhodobacter sphaeroides).